The chain runs to 441 residues: GPI mannosyltransferase 2 (441 aa).

The next 10 helical transmembrane spans lie at 4–24 (MTVL…LILV), 35–55 (ILFG…PGLG), 115–135 (LLAL…IFGG), 143–163 (LCFL…LSAP), 165–185 (GEAL…SSVL), 199–223 (LLAA…GVLF), 249–269 (VIVL…YIAF), 306–326 (YWVV…ALLL), 361–381 (LAII…VQII), and 418–438 (VAVQ…GSFL).

Belongs to the PIGV family.

The protein resides in the endoplasmic reticulum membrane. Its pathway is glycolipid biosynthesis; glycosylphosphatidylinositol-anchor biosynthesis. Mannosyltransferase involved in glycosylphosphatidylinositol-anchor biosynthesis. Transfers the second mannose to the glycosylphosphatidylinositol during GPI precursor assembly. The polypeptide is GPI mannosyltransferase 2 (gpi18) (Aspergillus fumigatus (strain ATCC MYA-4609 / CBS 101355 / FGSC A1100 / Af293) (Neosartorya fumigata)).